Consider the following 177-residue polypeptide: Meiotic chromosome segregation protein C17A2.07c (177 aa).

Positions 71-90 (EDDSINKPTEEADEAPRTQL) are disordered. Basic and acidic residues predominate over residues 74–86 (SINKPTEEADEAP).

The protein resides in the nucleus. Its function is as follows. Involved in meiotic chromosome segregation. The polypeptide is Meiotic chromosome segregation protein C17A2.07c (Schizosaccharomyces pombe (strain 972 / ATCC 24843) (Fission yeast)).